A 310-amino-acid polypeptide reads, in one-letter code: Protease HtpX homolog (310 aa).

The next 2 helical transmembrane spans lie at 16 to 36 (NAVL…VDAI) and 55 to 75 (IFPT…LVCI). Zn(2+) is bound at residue His166. Residue Glu167 is part of the active site. His170 is a binding site for Zn(2+). 2 consecutive transmembrane segments (helical) span residues 182–202 (VGIL…FFMG) and 214–234 (MILW…QMYL). Residue Glu239 participates in Zn(2+) binding.

It belongs to the peptidase M48B family. It depends on Zn(2+) as a cofactor.

Its subcellular location is the cell inner membrane. This is Protease HtpX homolog from Helicobacter pylori (strain J99 / ATCC 700824) (Campylobacter pylori J99).